Here is a 414-residue protein sequence, read N- to C-terminus: Membrane protein UL43 (414 aa).

The next 6 helical transmembrane spans lie at glycine 39–serine 59, glycine 61–leucine 81, alanine 96–glycine 116, valine 121–leucine 141, leucine 148–leucine 168, and alanine 184–phenylalanine 204. A disordered region spans residues proline 225–valine 253. A compositionally biased stretch (basic and acidic residues) spans alanine 228–aspartate 237. 2 consecutive transmembrane segments (helical) span residues glycine 339–isoleucine 359 and alanine 383–valine 403.

It belongs to the alphaherpesvirinae HHV-1 UL43 family.

It is found in the membrane. The polypeptide is Membrane protein UL43 (Homo sapiens (Human)).